We begin with the raw amino-acid sequence, 181 residues long: Endoribonuclease YbeY (181 aa).

3 residues coordinate Zn(2+): H115, H119, and H125.

This sequence belongs to the endoribonuclease YbeY family. Zn(2+) is required as a cofactor.

It localises to the cytoplasm. In terms of biological role, single strand-specific metallo-endoribonuclease involved in late-stage 70S ribosome quality control and in maturation of the 3' terminus of the 16S rRNA. This Bifidobacterium animalis subsp. lactis (strain AD011) protein is Endoribonuclease YbeY.